We begin with the raw amino-acid sequence, 79 residues long: Mipartoxin-3 (79 aa).

The signal sequence occupies residues 1-21 (MKTLLLTLVVVTIVCLDLGNS). 4 cysteine pairs are disulfide-bonded: cysteine 24/cysteine 41, cysteine 34/cysteine 59, cysteine 63/cysteine 71, and cysteine 72/cysteine 77.

Belongs to the three-finger toxin family. Short-chain subfamily. Expressed by the venom gland.

Its subcellular location is the secreted. Its function is as follows. Snake venom neurotoxin that blocks neuromuscular transmission, presenting a postsynaptic action through the nicotinic acetylcholine receptor (nAChR). Has no cytotoxic activity. This chain is Mipartoxin-3, found in Micrurus mipartitus (Red-tailed coral snake).